Consider the following 295-residue polypeptide: Caffeine dehydrogenase subunit beta (295 aa).

The 178-residue stretch at 1–178 (MKPTAFDYIR…CEIRIPVPSQ (178 aa)) folds into the FAD-binding PCMH-type domain. Residues 32–36 (AGGQS) and 111–115 (TLGGN) contribute to the FAD site.

Heterotrimer composed of an alpha (CdhA), a beta (CdhB) and a gamma (CdhC) subunit.

It catalyses the reaction caffeine + a ubiquinone + H2O = 1,3,7-trimethylurate + a ubiquinol. It carries out the reaction ubiquinone-0 + caffeine + H2O = ubiquinol-0 + 1,3,7-trimethylurate. The enzyme catalyses theobromine + a ubiquinone + H2O = 3,7-dimethylurate + a ubiquinol. In terms of biological role, component of the caffeine dehydrogenase complex that catalyzes the hydrolytical oxidation of 1,3,7-trimethylxanthine (caffeine) by incorporation of an oxygen atom originating from a water molecule into position C-8 to produce 1,3,7-trimethyluric acid (TMU). Coenzyme Q0 (ubiquinone-0) is the preferred electron acceptor and, to a lesser extent, coenzyme Q2 (ubiquinone-2) can also be used, but oxygen and NAD(P)(+) cannot. Is involved in a caffeine degradation pathway that allows Pseudomonas sp. strain CBB1 to grow on caffeine as the sole carbon and nitrogen source. Is also active with theobromine as substrate, but shows a very poor activity with theophylline and is not active with xanthine, 3-methylxanthine, 7-methylxanthine, TMU, and 3,7-dimethylurate. This is Caffeine dehydrogenase subunit beta from Pseudomonas sp. (strain CBB1).